The sequence spans 475 residues: Protein transport protein Sec61 subunit alpha (475 aa).

Topologically, residues 1 to 32 are cytoplasmic; that stretch reads MGFRFLDIVKPFTSLVPEVGQPDRKIPFREKV. A helical membrane pass occupies residues 33–53; the sequence is LWTAICLFIFLVCSQIPLYGI. Residues 54–75 lie on the Lumenal side of the membrane; sequence RSTDSSDPFYWAKVIMASNRGT. Residues 76–96 traverse the membrane as a helical segment; it reads LMELGISPIVTSGMVMQLLAG. Over 97–118 the chain is Cytoplasmic; the sequence is AKLIEIDQSVKADRDLFSAAQK. Residues 119–139 traverse the membrane as a helical segment; sequence LFGMLICVGQGVAYIWSGSYG. The Lumenal segment spans residues 140–145; that stretch reads DPAVLG. Residues 146–166 form a helical membrane-spanning segment; that stretch reads FGNCFLIVLQLFFAGIIVMLL. Residues 167-173 lie on the Cytoplasmic side of the membrane; it reads DELLQKG. The helical transmembrane segment at 174-194 threads the bilayer; it reads YGIGSGISLFIATNICETIVW. The Lumenal segment spans residues 195 to 241; that stretch reads KTFSPTTVSVGKGTEFEGAVIALFHLLLTRNDKVRALKEAFYRQNLP. A helical membrane pass occupies residues 242 to 262; that stretch reads NITNLLATVLIFMVVIYFQGF. Over 263–289 the chain is Cytoplasmic; that stretch reads RVDLPVKSTRVSGQQGTYPIKLFYTSN. The helical transmembrane segment at 290 to 310 threads the bilayer; that stretch reads IPIILQSALVSNLYFISQLLY. Residues 311–353 lie on the Lumenal side of the membrane; sequence RRFPDNILVNLFGAWRTSEYSQQMIPVSGLTYYISSPNNMSAV. Residues 354–374 traverse the membrane as a helical segment; it reads LADPFHALFYITFMLTSCALF. Residues 375–411 lie on the Cytoplasmic side of the membrane; that stretch reads SKVWIEVSGSSARDVAKQLKDQQMTMKGHRDTSVIKE. Residues 412–434 traverse the membrane as a helical segment; the sequence is LNRYIPTAAAFGGLCIGALTVVA. Topologically, residues 435-440 are lumenal; it reads DFMGAI. The chain crosses the membrane as a helical span at residues 441–461; it reads GSGTGILLAVTIIYQYFETFV. The Cytoplasmic segment spans residues 462-475; it reads KEQQELSGGIGGLF.

This sequence belongs to the SecY/SEC61-alpha family. In terms of assembly, heterotrimeric complex composed of SEC61-alpha, SEC61-beta and SEC61-gamma.

It is found in the endoplasmic reticulum membrane. Functionally, appears to play a crucial role in the insertion of secretory and membrane polypeptides into the ER. It is required for assembly of membrane and secretory proteins. Found to be tightly associated with membrane-bound ribosomes, either directly or through adaptor proteins. The sequence is that of Protein transport protein Sec61 subunit alpha (sec61a) from Dictyostelium discoideum (Social amoeba).